The primary structure comprises 1227 residues: Methionine synthase (1227 aa).

Residues 2–325 form the Hcy-binding domain; that stretch reads SSKVEQLRAQ…QHIAAMSRAV (324 aa). Residues cysteine 247, cysteine 310, and cysteine 311 each coordinate Zn(2+). Positions 356–617 constitute a Pterin-binding domain; that stretch reads FVNVGERTNV…LPAELRDAVE (262 aa). Residues 650–744 enclose the B12-binding N-terminal domain; sequence QQAEWRSWEV…FIEASKEQGK (95 aa). Methylcob(III)alamin is bound by residues glutamate 694, 756 to 760, histidine 759, serine 804, threonine 808, and alanine 860; that span reads GDVHD. The region spanning 746-881 is the B12-binding domain; sequence NGKMVIATVK…SDTQRDDFVA (136 aa). The region spanning 897–1227 is the AdoMet activation domain; that stretch reads KKPRTPPVTL…LAPNLGYDAD (331 aa). S-adenosyl-L-methionine contacts are provided by residues aspartate 946, arginine 1134, and 1189–1190; that span reads YY.

Belongs to the vitamin-B12 dependent methionine synthase family. It depends on methylcob(III)alamin as a cofactor. Requires Zn(2+) as cofactor.

It carries out the reaction (6S)-5-methyl-5,6,7,8-tetrahydrofolate + L-homocysteine = (6S)-5,6,7,8-tetrahydrofolate + L-methionine. It functions in the pathway amino-acid biosynthesis; L-methionine biosynthesis via de novo pathway; L-methionine from L-homocysteine (MetH route): step 1/1. Its function is as follows. Catalyzes the transfer of a methyl group from methyl-cobalamin to homocysteine, yielding enzyme-bound cob(I)alamin and methionine. Subsequently, remethylates the cofactor using methyltetrahydrofolate. The chain is Methionine synthase (metH) from Escherichia coli (strain K12).